Consider the following 219-residue polypeptide: 7-cyano-7-deazaguanine synthase (219 aa).

ATP is bound at residue 10–20 (FSGGQDSTTCL). Zn(2+) contacts are provided by Cys-188, Cys-197, Cys-200, and Cys-203.

This sequence belongs to the QueC family. Zn(2+) serves as cofactor.

The enzyme catalyses 7-carboxy-7-deazaguanine + NH4(+) + ATP = 7-cyano-7-deazaguanine + ADP + phosphate + H2O + H(+). Its pathway is purine metabolism; 7-cyano-7-deazaguanine biosynthesis. Catalyzes the ATP-dependent conversion of 7-carboxy-7-deazaguanine (CDG) to 7-cyano-7-deazaguanine (preQ(0)). In Bacteroides fragilis (strain ATCC 25285 / DSM 2151 / CCUG 4856 / JCM 11019 / LMG 10263 / NCTC 9343 / Onslow / VPI 2553 / EN-2), this protein is 7-cyano-7-deazaguanine synthase.